The primary structure comprises 317 residues: Melanocyte-stimulating hormone receptor (317 aa).

Over 1–37 (MAVQGSQRRLLGSLNSTPTAIPQLGLAANQTGAWCLE) the chain is Extracellular. Asparagine 29 is a glycosylation site (N-linked (GlcNAc...) asparagine). Residues 38–63 (VSIPDGLFLSLGLVSLVENVLVVATI) form a helical membrane-spanning segment. The Cytoplasmic portion of the chain corresponds to 64–72 (AKNRNLHSP). The helical transmembrane segment at 73–93 (MYCFICCLALSDLLVSGGNVL) threads the bilayer. Residues 94–118 (ETAVILLLEAGALAARAAVVQQLDN) are Extracellular-facing. A helical transmembrane segment spans residues 119-140 (VIDVITCSSMLSSLCFLGAIAV). Topologically, residues 141 to 163 (DRYISIFYALRYHSIVTLPRARR) are cytoplasmic. The helical transmembrane segment at 164–183 (AIAAIWVASVLFSTLFIAYY) threads the bilayer. Residues 184–191 (DHAAVLLC) are Extracellular-facing. A helical transmembrane segment spans residues 192 to 211 (LVVFFLAMLVLMAVLYVHML). Residues 212–240 (ARACQHAQGIARLHKRQRPVHQGFGLKGA) are Cytoplasmic-facing. Residues 241-266 (VTLTILLGIFFLCWGPFFLHLTLIVL) traverse the membrane as a helical segment. Residues 267–279 (CPQHPTCSCIFKN) are Extracellular-facing. A helical membrane pass occupies residues 280-300 (FNLFLALIICNAIIDPLIYAF). Over 301–317 (RSQELRRTLKEVLTCSW) the chain is Cytoplasmic. Cysteine 315 carries the S-palmitoyl cysteine lipid modification.

The protein belongs to the G-protein coupled receptor 1 family. As to quaternary structure, interacts with MGRN1, but does not undergo MGRN1-mediated ubiquitination; this interaction competes with GNAS-binding and thus inhibits agonist-induced cAMP production. Interacts with OPN3; the interaction results in a decrease in MC1R-mediated cAMP signaling and ultimately a decrease in melanin production in melanocytes.

It localises to the cell membrane. Its function is as follows. Receptor for MSH (alpha, beta and gamma) and ACTH. The activity of this receptor is mediated by G proteins which activate adenylate cyclase. Mediates melanogenesis, the production of eumelanin (black/brown) and phaeomelanin (red/yellow), via regulation of cAMP signaling in melanocytes. This Pongo pygmaeus (Bornean orangutan) protein is Melanocyte-stimulating hormone receptor (MC1R).